Here is a 354-residue protein sequence, read N- to C-terminus: Uroporphyrinogen decarboxylase (354 aa).

Substrate contacts are provided by residues 27 to 31 (RQAGR), Asp77, Tyr154, Thr209, and His327.

This sequence belongs to the uroporphyrinogen decarboxylase family. As to quaternary structure, homodimer.

Its subcellular location is the cytoplasm. It catalyses the reaction uroporphyrinogen III + 4 H(+) = coproporphyrinogen III + 4 CO2. Its pathway is porphyrin-containing compound metabolism; protoporphyrin-IX biosynthesis; coproporphyrinogen-III from 5-aminolevulinate: step 4/4. In terms of biological role, catalyzes the decarboxylation of four acetate groups of uroporphyrinogen-III to yield coproporphyrinogen-III. The chain is Uroporphyrinogen decarboxylase from Salmonella arizonae (strain ATCC BAA-731 / CDC346-86 / RSK2980).